The primary structure comprises 504 residues: Maturase K (504 aa).

Belongs to the intron maturase 2 family. MatK subfamily.

Its subcellular location is the plastid. The protein resides in the chloroplast. Its function is as follows. Usually encoded in the trnK tRNA gene intron. Probably assists in splicing its own and other chloroplast group II introns. The protein is Maturase K of Quercus rubra (Northern red oak).